A 550-amino-acid polypeptide reads, in one-letter code: Leucine-rich repeat LGI family member 2 (550 aa).

The signal sequence occupies residues 1–25 (MALWRGGGALGLLLLSAACLIPPSA). The LRRNT domain maps to 26–62 (QVRRLARCPATCSCTKESIICVGSSWVPRIVPGDISS). The N-linked (GlcNAc...) asparagine glycan is linked to Asn-67. LRR repeat units follow at residues 83–104 (SLQLLLLNSNSFTVIRDDAFAG) and 107–128 (HLEYLFIEGNKIETISRNAFRG). Positions 140-190 (NKFECDCKAKWLYLWLKMTNSTVSDVLCIGPPEYQEKKLNEVTSFDYECTT) constitute an LRRCT domain. Asn-159 carries an N-linked (GlcNAc...) asparagine glycan. EAR repeat units lie at residues 224 to 266 (DFVV…EWDH), 270 to 312 (NFRS…KYDE), 316 to 363 (KFVK…KWNS), 365 to 408 (GFYS…QWNK), 412 to 455 (KFVP…RWNS), 457 to 499 (QFVE…QWDK), and 503 to 545 (QFKK…EHII). Asn-276 carries N-linked (GlcNAc...) asparagine glycosylation. An N-linked (GlcNAc...) asparagine glycan is attached at Asn-407.

As to expression, brain.

The protein resides in the secreted. In terms of biological role, required for the development of soma-targeting inhibitory GABAergic synapses made by parvalbumin-positive basket cells. The protein is Leucine-rich repeat LGI family member 2 (Lgi2) of Mus musculus (Mouse).